Here is a 347-residue protein sequence, read N- to C-terminus: tRNA N6-adenosine threonylcarbamoyltransferase (347 aa).

Residues His113 and His117 each coordinate Fe cation. Substrate-binding positions include 136–140 (IVSGG), Asp170, Gly183, Asp187, and Asn282. Asp310 contributes to the Fe cation binding site.

It belongs to the KAE1 / TsaD family. It depends on Fe(2+) as a cofactor.

It is found in the cytoplasm. It catalyses the reaction L-threonylcarbamoyladenylate + adenosine(37) in tRNA = N(6)-L-threonylcarbamoyladenosine(37) in tRNA + AMP + H(+). Functionally, required for the formation of a threonylcarbamoyl group on adenosine at position 37 (t(6)A37) in tRNAs that read codons beginning with adenine. Is involved in the transfer of the threonylcarbamoyl moiety of threonylcarbamoyl-AMP (TC-AMP) to the N6 group of A37, together with TsaE and TsaB. TsaD likely plays a direct catalytic role in this reaction. This chain is tRNA N6-adenosine threonylcarbamoyltransferase, found in Bifidobacterium longum (strain NCC 2705).